We begin with the raw amino-acid sequence, 258 residues long: NAD(P)H-hydrate epimerase (258 aa).

In terms of domain architecture, YjeF N-terminal spans 15-244; it reads AFQLDQELMS…RIAKEYGIED (230 aa). A (6S)-NADPHX-binding site is contributed by 75–79; sequence NNGGD. K(+)-binding residues include asparagine 76 and aspartate 145. Residues 149–155 and aspartate 181 each bind (6S)-NADPHX; that span reads GFSFKPP. Serine 184 serves as a coordination point for K(+).

It belongs to the NnrE/AIBP family. K(+) is required as a cofactor.

The protein resides in the cytoplasm. It localises to the mitochondrion. It catalyses the reaction (6R)-NADHX = (6S)-NADHX. The enzyme catalyses (6R)-NADPHX = (6S)-NADPHX. Functionally, catalyzes the epimerization of the S- and R-forms of NAD(P)HX, a damaged form of NAD(P)H that is a result of enzymatic or heat-dependent hydration. This is a prerequisite for the S-specific NAD(P)H-hydrate dehydratase to allow the repair of both epimers of NAD(P)HX. The chain is NAD(P)H-hydrate epimerase from Candida albicans (strain SC5314 / ATCC MYA-2876) (Yeast).